We begin with the raw amino-acid sequence, 271 residues long: Small ribosomal subunit protein uS2 (271 aa).

Belongs to the universal ribosomal protein uS2 family.

The polypeptide is Small ribosomal subunit protein uS2 (Wolbachia pipientis subsp. Culex pipiens (strain wPip)).